We begin with the raw amino-acid sequence, 362 residues long: Glutamine synthetase (362 aa).

The region spanning 26–107 (LIAEYIWIDS…VLSECWNADG (82 aa)) is the GS beta-grasp domain. The 249-residue stretch at 114 to 362 (HRHEAAKLME…METCFGAVSE (249 aa)) folds into the GS catalytic domain.

Belongs to the glutamine synthetase family. Homooctamer.

It localises to the cytoplasm. It carries out the reaction L-glutamate + NH4(+) + ATP = L-glutamine + ADP + phosphate + H(+). The sequence is that of Glutamine synthetase (gln-1) from Neurospora crassa (strain ATCC 24698 / 74-OR23-1A / CBS 708.71 / DSM 1257 / FGSC 987).